The primary structure comprises 183 residues: UPF0114 protein HI_0507 (183 aa).

3 consecutive transmembrane segments (helical) span residues 30 to 50 (LQVP…YKFI), 68 to 88 (IMLG…LVMV), and 150 to 170 (TMMW…ALAY).

This sequence belongs to the UPF0114 family.

It localises to the cell membrane. The sequence is that of UPF0114 protein HI_0507 from Haemophilus influenzae (strain ATCC 51907 / DSM 11121 / KW20 / Rd).